We begin with the raw amino-acid sequence, 209 residues long: Chaperone protein TorD (209 aa).

This sequence belongs to the TorD/DmsD family. TorD subfamily.

It is found in the cytoplasm. In terms of biological role, involved in the biogenesis of TorA. Acts on TorA before the insertion of the molybdenum cofactor and, as a result, probably favors a conformation of the apoenzyme that is competent for acquiring the cofactor. The polypeptide is Chaperone protein TorD (Shewanella sp. (strain MR-4)).